Reading from the N-terminus, the 1215-residue chain is MVDVNKFESMQIGLASPDKIRSWSYGEVKKPETINYRTLKPEKDGLFDERIFGPTKDWECACGKYKRIRYKGVVCDRCGVEVTRSKVRRERMGHIELAAPVTHIWYFKGIPSRMGLVLDMSPRALEEIIYFASYVVLDPGNTPLEKKQLLSERDYRDKLLEYGSDAFKAEMGAEAIKKLLMSVDLDKEVTELKEELKEATGQKRTRAVRRLDILEAFVMSGNRPEWMVMDAIPVIPPDLRPMVQLEGGRFATSDLNDLYRRVINRNSRLKRLLDLNAPGIIVQNEKRMLQEAVDALIDNGRRGRPVAGPGNRPLKSLSHMLKGKQGRFRQNLLGKRVDYSGRSVIDVGPSLKFNQMGLPVPMALELFRPFIMKELVARGLASNIKNAKRQIDREDDDVFNVLEDVIKEHPVLLNRAPTLHRLGIQAFEPVLVSGKAMRLHPLACEAYNADFDGDQMAIHVPLSDEAQAEARLLMLAAHHILAPASGKPVVAPSQDMVIGNYYLTMEEANREGEGMIFTDLDEATLAYRNGIVHWHTRVGVQVTSMPDKPFTDEQRSKIMVTTVGKLIFNNILPKSFPYLNEPTSTNLNGYVPDKYFLEPGEDIHDYLQNAEIIPPFKKGFLSDIIAAVYQQYKVTATSELLDRIKDLGYNESTKSGLTVGMVDVTDLKEKPEIIAAAHKQVSTVTKQFRRGLITDHERYERVIGIWNDAKDEIQNALIHSFDQQNPIFMMSDSGARGNISNFTQLAGMRGLMAAPSGDIMELPITSNFREGLTVMEMFISTHGARKGMTDTALKTANSGYLTRRLVDVAQDVIIREKDCGTDRGLKIRAITDGNEMIEPLYDRILGRYTQKTVYDPQTGDVIVPKNQMIVEDTAQQIVDAGVEEVTIRSAFTCNTEHGVCEHCYGRNMATGDEVEVGEAVGTVAAQSIGEPGTQLTMRNFHTGGVAGNEDITQGLPRVQELFESRNPKGKAEITEVTGTVESIEENPAERTKEITIKGEADTRSYTLPITARMRVSEGDFIHRGGALNYGSVDPKELLRVRDVLSTETYILGEVQRVYRMQGVAISDKHVEIMVRQMLRKVRIMDPGDTDVLPGTLMDIQDFRRANYQTLIDGGIAATARPVILGITKAALETNSFLSAASFQETTRVLTDAAIRGKNDPLVGLKENVIIGKIIPAGTGMPDYRQIKPKEVGGTSTEGVYSISDLEKQMQEDSQA.

Residues cysteine 60, cysteine 62, cysteine 75, and cysteine 78 each contribute to the Zn(2+) site. Mg(2+) contacts are provided by aspartate 450, aspartate 452, and aspartate 454. Zn(2+) is bound by residues cysteine 819, cysteine 893, cysteine 900, and cysteine 903.

It belongs to the RNA polymerase beta' chain family. As to quaternary structure, the RNAP catalytic core consists of 2 alpha, 1 beta, 1 beta' and 1 omega subunit. When a sigma factor is associated with the core the holoenzyme is formed, which can initiate transcription. It depends on Mg(2+) as a cofactor. Zn(2+) is required as a cofactor.

It catalyses the reaction RNA(n) + a ribonucleoside 5'-triphosphate = RNA(n+1) + diphosphate. In terms of biological role, DNA-dependent RNA polymerase catalyzes the transcription of DNA into RNA using the four ribonucleoside triphosphates as substrates. The chain is DNA-directed RNA polymerase subunit beta' from Levilactobacillus brevis (strain ATCC 367 / BCRC 12310 / CIP 105137 / JCM 1170 / LMG 11437 / NCIMB 947 / NCTC 947) (Lactobacillus brevis).